Consider the following 482-residue polypeptide: MEDYGSYSTPLTARYASAEMSHLFSREMRINTWRQLWLNLAIAEKQLGLTQITDEAIEQLKAHVKITAPEFEIAAKEEKRQRHDVMAHIYTYGLAAPAASGIIHLGATSCFVTDNADLIFLRSAMDLLIPKLVNVINRLSQWSLRYKDIPTLGFTHYQPAQLTTVGKRATLWIQELLWDLRNFVRARNDIGFRGVKGTTGTQASFLALFEGDHAKVEELDKLVAKLSGFDNVYPVTGQTYDRKIDIDVLQPLASFGATAHKIATDIRLLANLKEVEEPFEAGQIGSSAMAYKRNPMRCERICSQARYIMNLIPNALNTASVQWFERTLDDSSNRRSLLPEAFLFTDSVLKILLNVISGMVIYPKVIQKHIRAELPFMATENIIMAMTKHGASRHECHEQIRVLSHQAGRVVKEEGGDNDLIERIKNTPYFAPIYDELDSLLDASTFVGRAPEQTESFVNKDVSQALAPFKSMITEEKVDLAV.

Residues 14–15 (RY), 82–84 (RHD), and 108–109 (TS) each bind substrate. The active-site Proton donor/acceptor is H156. Q238 provides a ligand contact to substrate. Catalysis depends on S286, which acts as the Proton donor/acceptor. Residues R300, R326, S331, and R335 each coordinate substrate.

The protein belongs to the lyase 1 family. Adenylosuccinate lyase subfamily. As to quaternary structure, homotetramer. Residues from neighboring subunits contribute catalytic and substrate-binding residues to each active site.

The enzyme catalyses N(6)-(1,2-dicarboxyethyl)-AMP = fumarate + AMP. The catalysed reaction is (2S)-2-[5-amino-1-(5-phospho-beta-D-ribosyl)imidazole-4-carboxamido]succinate = 5-amino-1-(5-phospho-beta-D-ribosyl)imidazole-4-carboxamide + fumarate. It participates in purine metabolism; AMP biosynthesis via de novo pathway; AMP from IMP: step 2/2. Its pathway is purine metabolism; IMP biosynthesis via de novo pathway; 5-amino-1-(5-phospho-D-ribosyl)imidazole-4-carboxamide from 5-amino-1-(5-phospho-D-ribosyl)imidazole-4-carboxylate: step 2/2. The protein is Adenylosuccinate lyase (ade8) of Schizosaccharomyces pombe (strain 972 / ATCC 24843) (Fission yeast).